Here is a 341-residue protein sequence, read N- to C-terminus: Serine/threonine-protein kinase PDIK1L (341 aa).

Positions 8-334 constitute a Protein kinase domain; that stretch reads YDLIREVGRG…LELRLVQIAF (327 aa). Residues 14–22 and Lys37 contribute to the ATP site; that span reads VGRGSYGVV. Residue Asp164 is the Proton acceptor of the active site.

The protein belongs to the protein kinase superfamily. Ser/Thr protein kinase family. As to expression, expressed in liver, kidney, pancreas, spleen, thymus and prostate.

The protein localises to the nucleus. The enzyme catalyses L-seryl-[protein] + ATP = O-phospho-L-seryl-[protein] + ADP + H(+). It carries out the reaction L-threonyl-[protein] + ATP = O-phospho-L-threonyl-[protein] + ADP + H(+). This Homo sapiens (Human) protein is Serine/threonine-protein kinase PDIK1L (PDIK1L).